Reading from the N-terminus, the 248-residue chain is 4-hydroxy-tetrahydrodipicolinate reductase (248 aa).

NAD(+) contacts are provided by residues 8–13, 75–77, and 99–102; these read GAKGRM, GTT, and ATNM. Histidine 131 acts as the Proton donor/acceptor in catalysis. (S)-2,3,4,5-tetrahydrodipicolinate is bound at residue histidine 132. Lysine 135 acts as the Proton donor in catalysis. 141 to 142 is a (S)-2,3,4,5-tetrahydrodipicolinate binding site; sequence GT.

This sequence belongs to the DapB family.

Its subcellular location is the cytoplasm. It carries out the reaction (S)-2,3,4,5-tetrahydrodipicolinate + NAD(+) + H2O = (2S,4S)-4-hydroxy-2,3,4,5-tetrahydrodipicolinate + NADH + H(+). The enzyme catalyses (S)-2,3,4,5-tetrahydrodipicolinate + NADP(+) + H2O = (2S,4S)-4-hydroxy-2,3,4,5-tetrahydrodipicolinate + NADPH + H(+). It functions in the pathway amino-acid biosynthesis; L-lysine biosynthesis via DAP pathway; (S)-tetrahydrodipicolinate from L-aspartate: step 4/4. Catalyzes the conversion of 4-hydroxy-tetrahydrodipicolinate (HTPA) to tetrahydrodipicolinate. In Campylobacter jejuni subsp. doylei (strain ATCC BAA-1458 / RM4099 / 269.97), this protein is 4-hydroxy-tetrahydrodipicolinate reductase.